The primary structure comprises 248 residues: 2-acetamido-2-deoxy-D-galactose-binding seed lectin 2 (248 aa).

An N-linked (GlcNAc...) asparagine; partial glycan is attached at Asn-119. Residues Glu-128 and Asp-130 each contribute to the Mn(2+) site. 4 residues coordinate Ca(2+): Asp-130, Tyr-132, Asn-134, and Asp-138. Residues Asp-138 and His-144 each coordinate Mn(2+).

It belongs to the leguminous lectin family.

The polypeptide is 2-acetamido-2-deoxy-D-galactose-binding seed lectin 2 (Cytisus scoparius (Scotch broom)).